The following is a 60-amino-acid chain: Large ribosomal subunit protein bL32 (60 aa).

Residues 1 to 16 (MPNPKRRHSKKRTSTR) are compositionally biased toward basic residues. A disordered region spans residues 1-28 (MPNPKRRHSKKRTSTRRAHDALKQPGLS).

It belongs to the bacterial ribosomal protein bL32 family.

This is Large ribosomal subunit protein bL32 from Solibacter usitatus (strain Ellin6076).